A 696-amino-acid polypeptide reads, in one-letter code: Translation initiation factor IF-2 (696 aa).

Residues 187–361 (ERPPVVTVMG…EMQEIKGIPD (175 aa)) form the tr-type G domain. The G1 stretch occupies residues 196-203 (GHVDHGKT). GTP is bound at residue 196-203 (GHVDHGKT). The G2 stretch occupies residues 221-225 (GITQS). The interval 242–245 (DTPG) is G3. GTP is bound by residues 242–246 (DTPGH) and 296–299 (NKID). Positions 296–299 (NKID) are G4. Residues 333-335 (SAK) form a G5 region.

Belongs to the TRAFAC class translation factor GTPase superfamily. Classic translation factor GTPase family. IF-2 subfamily.

The protein resides in the cytoplasm. One of the essential components for the initiation of protein synthesis. Protects formylmethionyl-tRNA from spontaneous hydrolysis and promotes its binding to the 30S ribosomal subunits. Also involved in the hydrolysis of GTP during the formation of the 70S ribosomal complex. The sequence is that of Translation initiation factor IF-2 from Thermosipho africanus (strain TCF52B).